We begin with the raw amino-acid sequence, 186 residues long: MAALDAIREALPEPARDIKLNLQAVLQPGTLTPAQRWGVAVATAAAARNERLLAAALADARAEVEPAVIEDALAAAAVMAMNNVYYRFRHMVGKASYAEKPARLRMNRLVKPAASKVDFELFALAVSAVNGCETCVRSHEQVVVAGGLSEDQVHEAVRIAAVLHAAAVSLELAGYAAVPSAAAAAG.

Cys132 (proton donor) is an active-site residue. Residues Cys132 and Cys135 are joined by a disulfide bond. The Cysteine sulfenic acid (-SOH) intermediate role is filled by Cys135.

It belongs to the AhpD family.

It catalyses the reaction N(6)-[(R)-dihydrolipoyl]-L-lysyl-[lipoyl-carrier protein] + a hydroperoxide = N(6)-[(R)-lipoyl]-L-lysyl-[lipoyl-carrier protein] + an alcohol + H2O. In terms of biological role, antioxidant protein with alkyl hydroperoxidase activity. Required for the reduction of the AhpC active site cysteine residues and for the regeneration of the AhpC enzyme activity. This chain is Alkyl hydroperoxide reductase AhpD, found in Anaeromyxobacter dehalogenans (strain 2CP-1 / ATCC BAA-258).